Consider the following 199-residue polypeptide: Fe/S biogenesis protein NfuA (199 aa).

Positions 151 and 154 each coordinate [4Fe-4S] cluster.

Belongs to the NfuA family. As to quaternary structure, homodimer. The cofactor is [4Fe-4S] cluster.

Involved in iron-sulfur cluster biogenesis. Binds a 4Fe-4S cluster, can transfer this cluster to apoproteins, and thereby intervenes in the maturation of Fe/S proteins. Could also act as a scaffold/chaperone for damaged Fe/S proteins. The chain is Fe/S biogenesis protein NfuA from Xanthomonas oryzae pv. oryzae (strain MAFF 311018).